The primary structure comprises 361 residues: Neuronal-specific septin-3 (361 aa).

Residues M1–R46 are disordered. Positions V15–P34 are enriched in low complexity. The segment covering G36–R46 has biased composition (gly residues). The 273-residue stretch at A70–D342 folds into the Septin-type G domain. The segment at G80 to S87 is G1 motif. Residues G80 to S87 and T114 each bind GTP. The interval D137 to G140 is G3 motif. Residues A219–D222 form a G4 motif region. GTP-binding positions include K220–E228, G276, and R291. A disordered region spans residues N341–L361. The segment covering I349–L361 has biased composition (polar residues).

This sequence belongs to the TRAFAC class TrmE-Era-EngA-EngB-Septin-like GTPase superfamily. Septin GTPase family.

The protein resides in the cytoplasm. Its function is as follows. May be involved in cytokinesis. This is Neuronal-specific septin-3 from Danio rerio (Zebrafish).